The primary structure comprises 374 residues: Histidinol-phosphate aminotransferase (374 aa).

At lysine 215 the chain carries N6-(pyridoxal phosphate)lysine.

Belongs to the class-II pyridoxal-phosphate-dependent aminotransferase family. Histidinol-phosphate aminotransferase subfamily. Homodimer. It depends on pyridoxal 5'-phosphate as a cofactor.

It carries out the reaction L-histidinol phosphate + 2-oxoglutarate = 3-(imidazol-4-yl)-2-oxopropyl phosphate + L-glutamate. The protein operates within amino-acid biosynthesis; L-histidine biosynthesis; L-histidine from 5-phospho-alpha-D-ribose 1-diphosphate: step 7/9. This Yersinia enterocolitica serotype O:8 / biotype 1B (strain NCTC 13174 / 8081) protein is Histidinol-phosphate aminotransferase.